The chain runs to 451 residues: Phosphoglucosamine mutase (451 aa).

S101 serves as the catalytic Phosphoserine intermediate. 4 residues coordinate Mg(2+): S101, D240, D242, and D244. At S101 the chain carries Phosphoserine.

Belongs to the phosphohexose mutase family. Mg(2+) is required as a cofactor. Post-translationally, activated by phosphorylation.

It catalyses the reaction alpha-D-glucosamine 1-phosphate = D-glucosamine 6-phosphate. Its function is as follows. Catalyzes the conversion of glucosamine-6-phosphate to glucosamine-1-phosphate. The protein is Phosphoglucosamine mutase of Streptococcus pyogenes serotype M12 (strain MGAS2096).